The primary structure comprises 748 residues: Wings apart-like protein homolog 1 (748 aa).

2 disordered regions span residues threonine 23 to threonine 199 and glutamate 614 to arginine 644. Low complexity predominate over residues proline 35–proline 64. Composition is skewed to polar residues over residues serine 68–serine 79 and leucine 87–asparagine 96. Low complexity predominate over residues isoleucine 172 to arginine 182. The WAPL domain occupies lysine 205–threonine 723. A compositionally biased stretch (acidic residues) spans glycine 616–glutamate 633. Positions aspartate 634–arginine 644 are enriched in basic and acidic residues.

This sequence belongs to the WAPL family.

Its subcellular location is the nucleus. In terms of biological role, regulator of meiotic chromosome structure and function, playing a role in sister chromatid cohesion, possibly via antagonizing the coh-3/-4 association with axial elements in nuclei during late prophase, cohesin association with chromatin, DNA double strand break repair and polar body positioning following meiotic divisions during oogenesis. Regulates the morphogenesis and temporal assembly of axial elements to control the organization of meiotic chromosomes in pachytene nuclei and is also involved in meiotic chromosomal remodeling in late pachytene nuclei. Required for the removal of the cohesin component scc-1 from mitotic chromosomes. This Caenorhabditis elegans protein is Wings apart-like protein homolog 1.